The following is a 451-amino-acid chain: MLDINLFREEKGNNPEIIRESQRRRFASVEIVDEIIKLDKEWRQRQFEVDSFRKEFNKLNKQVAQLKIKKEDASEIIQQTEKNKQDSTAKEAEVREAYAALKAKLEQVGNLVHDSVPVDKDEANNLVIKLWGEKRFSTPGLKLKNHVDLVELLGIADTKRGAEIAGARGFFLKGDGLMLNQALINFGLTFLKKRGFTGLQPPFFMRKDVMAKCAQLAQFDEELYKVTGEGDDKYLIATAEQPLCAYHIDEWIHPTELPLRYAGYSSCFRKEAGSHGRDTLGIFRVHQFEKIEQFCITGPNENASWEMLDEMMKNSEDFYQALKLPYQIVSIVSGALNDAAAKKYDLEAWFPSSETFRELVSCSNCTDYQARRLEIRYGQKKSNEQTKQYVHMLNSTLTATERTICCILENYQREDGVDIPEVLQPFMGGETFLPFKAKPVVADTKGKKSKA.

A disulfide bridge connects residues Cys213 and Cys244. 238–240 serves as a coordination point for L-serine; that stretch reads TAE. ATP is bound by residues 269-271 and Val285; that span reads RKE. Glu292 provides a ligand contact to L-serine. 358 to 361 is an ATP binding site; it reads ELVS. Position 396 (Thr396) interacts with L-serine.

The protein belongs to the class-II aminoacyl-tRNA synthetase family. Type-1 seryl-tRNA synthetase subfamily. As to quaternary structure, homodimer. The tRNA molecule binds across the dimer.

Its subcellular location is the cytoplasm. The protein localises to the cytosol. It catalyses the reaction tRNA(Ser) + L-serine + ATP = L-seryl-tRNA(Ser) + AMP + diphosphate + H(+). Functionally, catalyzes the attachment of serine to tRNA(Ser) in a two-step reaction: serine is first activated by ATP to form Ser-AMP and then transferred to the acceptor end of tRNA(Ser). The chain is Serine--tRNA ligase, cytoplasmic from Arabidopsis thaliana (Mouse-ear cress).